The primary structure comprises 206 residues: Sclerostin domain-containing protein 1 (206 aa).

An N-terminal signal peptide occupies residues 1–23 (MLPPAIHLSLIPLLCILMKNCLA). The segment at 42 to 62 (AHPSSNSTLNQARNGGRHFSS) is disordered. Over residues 43 to 62 (HPSSNSTLNQARNGGRHFSS) the composition is skewed to polar residues. A glycan (N-linked (GlcNAc...) asparagine) is linked at Asn47. Intrachain disulfides connect Cys75–Cys133, Cys89–Cys147, Cys100–Cys163, and Cys104–Cys165. The CTCK domain maps to 75 to 170 (CRELRSTKYI…TACKCKRYTR (96 aa)). Asn173 carries N-linked (GlcNAc...) asparagine glycosylation. Residues 176–206 (SHNFESVSPAKPAQHHRERKRASKSSKHSLS) are disordered. The segment covering 188–206 (AQHHRERKRASKSSKHSLS) has biased composition (basic residues).

Belongs to the sclerostin family. Interacts with BMP2, BMP4, BMP6 and BMP7 with high affinity. As to expression, highly expressed within the maximally sensitized/receptive endometrium. Weakly expressed in brain, kidney and the female reproductive tract. Expressed in the dermal papilla (DP) and at high level in the precortex of both anagen vibrissae and pelage follicles. Dynymic expression during the hair cycle.

It localises to the secreted. Its function is as follows. Directly antagonizes activity of BMP2, BMP4, BMP6 and BMP7 in a dose-dependent manner. May be involved in the onset of endometrial receptivity for implantation/sensitization for the decidual cell reaction. Enhances Wnt signaling and inhibits TGF-beta signaling. The sequence is that of Sclerostin domain-containing protein 1 (Sostdc1) from Rattus norvegicus (Rat).